Here is an 834-residue protein sequence, read N- to C-terminus: Semaphorin-4C (834 aa).

A signal peptide spans 1–20 (MAPHWAVWLLAAGLWGLGIG). The Extracellular segment spans residues 21–664 (AEMWWNLVPR…EARAPLENLG (644 aa)). In terms of domain architecture, Sema spans 30–497 (RKTVSSGELV…SRSQLVQLSL (468 aa)). The dominant negative effect on myogenic differentiation stretch occupies residues 46-489 (SQTGIQDFLT…SKKVLFAGSR (444 aa)). The cysteines at positions 99 and 110 are disulfide-linked. 2 N-linked (GlcNAc...) asparagine glycosylation sites follow: Asn106 and Asn121. 3 disulfides stabilise this stretch: Cys128–Cys137, Cys261–Cys370, and Cys285–Cys330. 2 N-linked (GlcNAc...) asparagine glycosylation sites follow: Asn310 and Asn419. A PSI domain is found at 499–552 (DCTKYRFCVDCVLARDPYCAWNVNTSRCVATTSGRSGSFLVQHVANLDTSKMCN). 2 disulfides stabilise this stretch: Cys500-Cys517 and Cys509-Cys526. Residues Asn522 and Asn565 are each glycosylated (N-linked (GlcNAc...) asparagine). An Ig-like C2-type domain is found at 557–645 (KKVRSIPKNI…RLAAESYLVA (89 aa)). A disulfide bridge connects residues Cys578 and Cys628. A helical membrane pass occupies residues 665-685 (LVWLAVVALGAVCLVLLLLVL). At 686–834 (SLRRRLREEL…PDSNPEESSV (149 aa)) the chain is on the cytoplasmic side. Position 743 is a phosphoserine (Ser743). The tract at residues 749–834 (GHARCQPGGG…PDSNPEESSV (86 aa)) is disordered. A compositionally biased stretch (pro residues) spans 757–773 (GGPPSPPPGIPGQPLPS). Positions 831 to 834 (ESSV) match the PDZ-binding motif.

It belongs to the semaphorin family. As to quaternary structure, interacts (via the PDZ-binding motif) with GIPC (via the PDZ domain). Interacts with NCDN. Interacts (via the PDZ-binding motif) with DLG4. Interacts with PLXNB2. As to expression, predominantly expressed in brain (at protein level).

It is found in the postsynaptic density membrane. It localises to the cytoplasmic vesicle. The protein resides in the secretory vesicle. Its subcellular location is the synaptic vesicle membrane. In terms of biological role, cell surface receptor for PLXNB2 that plays an important role in cell-cell signaling. PLXNB2 binding promotes downstream activation of RHOA and phosphorylation of ERBB2 at 'Tyr-1248'. Required for normal brain development, axon guidance and cell migration. Probable signaling receptor which may play a role in myogenic differentiation through activation of the stress-activated MAPK cascade. In Mus musculus (Mouse), this protein is Semaphorin-4C (Sema4c).